The following is a 41-amino-acid chain: Large ribosomal subunit protein bL36 (41 aa).

It belongs to the bacterial ribosomal protein bL36 family.

This Gluconobacter oxydans (strain 621H) (Gluconobacter suboxydans) protein is Large ribosomal subunit protein bL36.